A 378-amino-acid polypeptide reads, in one-letter code: Isobutylamine N-hydroxylase (378 aa).

Exists in dimeric or trimeric form depending upon buffer conditions. It can form an isobutylamine N-hydroxylase two component enzyme system formed of a flavin reductase component (VlmR) and a monooxygenase component (VlmH).

It catalyses the reaction 2-methylpropan-1-amine + FADH2 + O2 = N-(2-methylpropyl)hydroxylamine + FAD + H2O + 2 H(+). It carries out the reaction 2-methylpropan-1-amine + FMNH2 + O2 = N-(2-methylpropyl)hydroxylamine + FMN + H2O + 2 H(+). Its activity is regulated as follows. Inhibited by 5',5'-dithio-bis(2-nitrobenzoic acid) (DTNB) and 4-(hydroxymercuri)benzoic acid (p-HMB). Its function is as follows. Involved in the biosynthesis of the azoxy antibiotic valanimycin, which has an antitumor activity. Catalyzes the oxidation of isobutylamine to isobutylhydroxylamine via the formation of a flavin 4a-hydroperoxide. Unlike other known N-hydroxylases, isobutylamine N-hydroxylase cannot carry out the reduction of the flavin cofactor and requires the NADPH-flavin oxidoreductase VlmR. Also able to oxidize propan-1-amine, butan-1-amine, butan-2-amine and benzylamine. It has a similar activity with either FMNH(2) or FADH(2). The sequence is that of Isobutylamine N-hydroxylase from Streptomyces viridifaciens.